A 466-amino-acid chain; its full sequence is F-box/WD repeat-containing protein 15 (466 aa).

The F-box domain occupies 1–45; sequence MAIHLPCLPMMKILSYLDAYSLLQAAQVNKDWNELASSDVLWRKL. WD repeat units lie at residues 101 to 143, 146 to 185, 187 to 228, 339 to 379, and 381 to 419; these read GYAC…ITWK, EQPA…ALAT, NLKS…LIST, LQCH…KTFQ, and CPEM…LRKC.

In terms of assembly, part of an SCF (SKP1-CUL1-F-box protein) E3 ubiquitin-protein ligase complex. Interacts with KAT7 and SKP1. In terms of tissue distribution, specifically expressed in oocytes from follicles of the medullary region of the ovary.

It is found in the cytoplasm. The protein localises to the cytosol. It localises to the endoplasmic reticulum. Its subcellular location is the nucleus. It functions in the pathway protein modification; protein ubiquitination. In terms of biological role, substrate-recognition component of an SCF (SKP1-CUL1-F-box protein)-type E3 ubiquitin ligase complex. Promotes KAT7 ubiquitination and subsequent degradation in collaboration with MAP2K1 kinase, leading to reduced histone H3K14 acetylation and increased cell proliferation. The chain is F-box/WD repeat-containing protein 15 from Mus musculus (Mouse).